Here is a 120-residue protein sequence, read N- to C-terminus: Large ribosomal subunit protein eL8 (120 aa).

The protein belongs to the eukaryotic ribosomal protein eL8 family. Part of the 50S ribosomal subunit. Probably part of the RNase P complex.

The protein localises to the cytoplasm. Its function is as follows. Multifunctional RNA-binding protein that recognizes the K-turn motif in ribosomal RNA, the RNA component of RNase P, box H/ACA, box C/D and box C'/D' sRNAs. This Halobacterium salinarum (strain ATCC 29341 / DSM 671 / R1) protein is Large ribosomal subunit protein eL8.